The chain runs to 473 residues: Cell division protein FtsZ homolog 2-2, chloroplastic (473 aa).

Residues 124-128 (GGGSN), 213-215 (GTG), Glu-244, and Arg-248 each bind GTP. Phosphothreonine; by PGK1 is present on Thr-282. Asp-292 contacts GTP. Residues 424–455 (EEGEGRPLQATQADASMGATRRPSSSFTEGSS) form a disordered region. Polar residues predominate over residues 445 to 454 (RPSSSFTEGS).

This sequence belongs to the FtsZ family. In terms of assembly, aggregates to form a contractile ring-like structure; contraction of the ring was accompanied by an increase in the filament turnover rate. Self-interacts and binds to FTSZ1 in heteropolymers to form two morphologically distinct types of filaments, termed type-I (smooth filaments) and -II (rough filaments), in a GTP-dependent manner. Part of a complex made of ARC3, ARC6, FTSZ1 and FTSZ2. Interacts (via C-terminus) with ARC6. Interacts with CDP1/PARC6. Binds to PGK1. Phosphorylation at Thr-282 is required for the formation of contractile ring at the chloroplast midpoint.

The protein resides in the plastid. Its subcellular location is the chloroplast stroma. It is found in the chloroplast thylakoid membrane. Functionally, exhibits GTPase activity. Component of the plastid division machinery that forms a contractile ring at the division site. Contributes to plastid division in the vegetative shoot apex, at the shoot apical meristem (SAM) where the proplastid-to-chloroplast transition takes place. The sequence is that of Cell division protein FtsZ homolog 2-2, chloroplastic from Arabidopsis thaliana (Mouse-ear cress).